Consider the following 411-residue polypeptide: Glutamate dehydrogenase A (411 aa).

Lysine 102 is an active-site residue.

Belongs to the Glu/Leu/Phe/Val dehydrogenases family.

The enzyme catalyses L-glutamate + NAD(+) + H2O = 2-oxoglutarate + NH4(+) + NADH + H(+). It carries out the reaction L-glutamate + NADP(+) + H2O = 2-oxoglutarate + NH4(+) + NADPH + H(+). The polypeptide is Glutamate dehydrogenase A (GDHA) (Nicotiana plumbaginifolia (Leadwort-leaved tobacco)).